Reading from the N-terminus, the 262-residue chain is MEGGRLGCAVCVLTGASRGFGRALAPQLAGLLSPGSVLLLSARSDSMLRQLKEELCTQQPGLQVVLAAADLGTESGVQQLLSAVRELPRPERLQRLLLINNAGTLGDVSKGFLNINDLAEVNNYWALNLTSMLCLTTGTLNAFSNSPGLSKTVVNISSLCALQPFKGWGLYCAGKAARDMLYQVLAVEEPSVRVLSYAPGPLDTNMQQLARETSMDPELRSRLQKLNSEGELVDCGTSAQKLLSLLQRDTFQSGAHVDFYDI.

Met1 carries the post-translational modification N-acetylmethionine. 15–21 (GASRGFG) lines the NADP(+) pocket. Ser33 carries the phosphoserine modification. Residue 43 to 44 (RS) participates in NADP(+) binding. Ser46 carries the post-translational modification Phosphoserine; by CaMK2; in vitro. Residue 70 to 71 (DL) coordinates NADP(+). Substrate contacts are provided by residues 158–159 (SL) and Tyr171. Lys175 is an NADP(+) binding site. Residue Ser196 is modified to Phosphoserine; by CaMK2; in vitro. Gly200 serves as a coordination point for substrate. Residue 202 to 207 (LDTNMQ) coordinates NADP(+). Ser214 carries the phosphoserine; by CaMK2; in vitro modification. Asp258 serves as a coordination point for substrate.

This sequence belongs to the sepiapterin reductase family. Homodimer. In terms of processing, in vitro phosphorylation of Ser-46, Ser-196 and Ser-214 by CaMK2 does not change kinetic parameters.

Its subcellular location is the cytoplasm. The enzyme catalyses L-erythro-7,8-dihydrobiopterin + NADP(+) = L-sepiapterin + NADPH + H(+). It catalyses the reaction (6R)-L-erythro-5,6,7,8-tetrahydrobiopterin + 2 NADP(+) = 6-pyruvoyl-5,6,7,8-tetrahydropterin + 2 NADPH + 2 H(+). Functionally, catalyzes the final one or two reductions in tetra-hydrobiopterin biosynthesis to form 5,6,7,8-tetrahydrobiopterin. The polypeptide is Sepiapterin reductase (Spr) (Rattus norvegicus (Rat)).